We begin with the raw amino-acid sequence, 264 residues long: Small ribosomal subunit protein uS2 (264 aa).

This sequence belongs to the universal ribosomal protein uS2 family.

This Synechococcus sp. (strain JA-2-3B'a(2-13)) (Cyanobacteria bacterium Yellowstone B-Prime) protein is Small ribosomal subunit protein uS2.